The following is a 335-amino-acid chain: UPF0353 protein Mflv_3659 (335 aa).

The next 2 helical transmembrane spans lie at 18–38 and 67–87; these read WFFL…VVQL and LPAV…AGPT. The VWFA domain maps to 98 to 294; the sequence is VVMLVIDVSQ…EQLKQVFTNL (197 aa). Residues 309–329 form a helical membrane-spanning segment; that stretch reads VGWLRLGAGVLALAALGALLI.

The protein belongs to the UPF0353 family.

The protein localises to the cell membrane. This chain is UPF0353 protein Mflv_3659, found in Mycolicibacterium gilvum (strain PYR-GCK) (Mycobacterium gilvum (strain PYR-GCK)).